The following is a 188-amino-acid chain: Trafficking protein particle complex subunit 5 (188 aa).

Ser10 carries the phosphoserine modification.

It belongs to the TRAPP small subunits family. BET3 subfamily. In terms of assembly, component of the multisubunit TRAPP (transport protein particle) complex, which includes at least TRAPPC2, TRAPPC2L, TRAPPC3, TRAPPC3L, TRAPPC4, TRAPPC5, TRAPPC8, TRAPPC9, TRAPPC10, TRAPPC11 and TRAPPC12.

The protein resides in the golgi apparatus. It localises to the cis-Golgi network. It is found in the endoplasmic reticulum. Its function is as follows. May play a role in vesicular transport from endoplasmic reticulum to Golgi. The sequence is that of Trafficking protein particle complex subunit 5 (TRAPPC5) from Bos taurus (Bovine).